Here is an 863-residue protein sequence, read N- to C-terminus: Leucine--tRNA ligase (863 aa).

The short motif at 42–52 is the 'HIGH' region element; the sequence is PYPSGKIHMGH. Positions 618 to 622 match the 'KMSKS' region motif; sequence KMSKS. Lys621 provides a ligand contact to ATP.

It belongs to the class-I aminoacyl-tRNA synthetase family.

It localises to the cytoplasm. The catalysed reaction is tRNA(Leu) + L-leucine + ATP = L-leucyl-tRNA(Leu) + AMP + diphosphate. The protein is Leucine--tRNA ligase of Desulfatibacillum aliphaticivorans.